The chain runs to 407 residues: Na(+)-translocating NADH-quinone reductase subunit F (407 aa).

Residues 3 to 23 traverse the membrane as a helical segment; sequence ITLGIAMFTVIVLALAVIILF. The region spanning 32 to 126 is the 2Fe-2S ferredoxin-type domain; that stretch reads GDITIEINDD…SMKVELPEEV (95 aa). [2Fe-2S] cluster is bound by residues cysteine 69, cysteine 75, cysteine 78, and cysteine 110. An FAD-binding FR-type domain is found at 129–269; that stretch reads VKKWECTVIS…SGPFGEFFAK (141 aa). The tract at residues 272-389 is catalytic; the sequence is DAEMVFVGGG…PIMNASVIKM (118 aa).

The protein belongs to the NqrF family. In terms of assembly, composed of six subunits; NqrA, NqrB, NqrC, NqrD, NqrE and NqrF. It depends on [2Fe-2S] cluster as a cofactor. FAD serves as cofactor.

It is found in the cell inner membrane. The enzyme catalyses a ubiquinone + n Na(+)(in) + NADH + H(+) = a ubiquinol + n Na(+)(out) + NAD(+). In terms of biological role, NQR complex catalyzes the reduction of ubiquinone-1 to ubiquinol by two successive reactions, coupled with the transport of Na(+) ions from the cytoplasm to the periplasm. The first step is catalyzed by NqrF, which accepts electrons from NADH and reduces ubiquinone-1 to ubisemiquinone by a one-electron transfer pathway. The chain is Na(+)-translocating NADH-quinone reductase subunit F from Pasteurella multocida (strain Pm70).